A 270-amino-acid polypeptide reads, in one-letter code: Putative carboxymethylenebutenolidase (270 aa).

Catalysis depends on residues Cys-147, Asp-204, and His-236.

It belongs to the dienelactone hydrolase family.

The catalysed reaction is 2-(5-oxo-2,5-dihydrofuran-2-ylidene)acetate + H2O = 4-oxohex-2-enedioate + H(+). The protein is Putative carboxymethylenebutenolidase (ysgA) of Salmonella typhimurium (strain LT2 / SGSC1412 / ATCC 700720).